We begin with the raw amino-acid sequence, 144 residues long: Large ribosomal subunit protein uL15 (144 aa).

The tract at residues 1–51 (MRLNTIKPGAGSKSAGKRVGRGIGSGLGKTCGRGHKGQKSRAGGFHKVGFE) is disordered. The segment covering 21–31 (RGIGSGLGKTC) has biased composition (gly residues).

This sequence belongs to the universal ribosomal protein uL15 family. As to quaternary structure, part of the 50S ribosomal subunit.

Its function is as follows. Binds to the 23S rRNA. The chain is Large ribosomal subunit protein uL15 from Azoarcus sp. (strain BH72).